Here is a 178-residue protein sequence, read N- to C-terminus: dCTP deaminase (178 aa).

DCTP is bound by residues 99 to 104 (RSTWAR) and aspartate 115. The Proton donor/acceptor role is filled by glutamate 125. DCTP-binding residues include tyrosine 157 and glutamine 164.

The protein belongs to the dCTP deaminase family. In terms of assembly, homotrimer.

The enzyme catalyses dCTP + H2O + H(+) = dUTP + NH4(+). Its pathway is pyrimidine metabolism; dUMP biosynthesis; dUMP from dCTP (dUTP route): step 1/2. Its function is as follows. Catalyzes the deamination of dCTP to dUTP. The sequence is that of dCTP deaminase from Aeropyrum pernix (strain ATCC 700893 / DSM 11879 / JCM 9820 / NBRC 100138 / K1).